Consider the following 85-residue polypeptide: uncharacterized protein (85 aa).

A disordered region spans residues 44 to 85 (EAHPSEHNGTVPRSLSQEWAKILAEEAEENSEENNDESEEDN). Residues 50–60 (HNGTVPRSLSQ) show a composition bias toward polar residues. Acidic residues predominate over residues 68–85 (EEAEENSEENNDESEEDN).

This is an uncharacterized protein from Haloarcula hispanica (His1V).